The chain runs to 142 residues: Putative transmembrane protein INAFM1 (142 aa).

Over residues 1–19 (MRGTSCVGGGAESPGGAGL) the composition is skewed to gly residues. The disordered stretch occupies residues 1–22 (MRGTSCVGGGAESPGGAGLSEG). The helical transmembrane segment at 36-56 (YFLCVSLAAVLLAVYYGLIWV) threads the bilayer. Disordered stretches follow at residues 61–83 (PAAP…PGVP) and 99–142 (VPGG…RRPG). A compositionally biased stretch (pro residues) spans 64-83 (PAGPQPSAPSPPCAARPGVP). Positions 99 to 111 (VPGGPRPQLQLPL) are enriched in low complexity. The segment covering 117–142 (YSDPDRRPSRQTPRETPEAAEGRRPG) has biased composition (basic and acidic residues).

It is found in the membrane. In Homo sapiens (Human), this protein is Putative transmembrane protein INAFM1.